The chain runs to 113 residues: Large ribosomal subunit protein uL22 (113 aa).

Belongs to the universal ribosomal protein uL22 family. Part of the 50S ribosomal subunit.

Its function is as follows. This protein binds specifically to 23S rRNA; its binding is stimulated by other ribosomal proteins, e.g. L4, L17, and L20. It is important during the early stages of 50S assembly. It makes multiple contacts with different domains of the 23S rRNA in the assembled 50S subunit and ribosome. Functionally, the globular domain of the protein is located near the polypeptide exit tunnel on the outside of the subunit, while an extended beta-hairpin is found that lines the wall of the exit tunnel in the center of the 70S ribosome. This Geobacillus thermodenitrificans (strain NG80-2) protein is Large ribosomal subunit protein uL22.